A 61-amino-acid chain; its full sequence is MAKKSLKVKAARVAKFSTRAYTRCQLCGRPHAVLRKFEICRICFRKLAHEGKIPGLKKASW.

Residues Cys24, Cys27, Cys40, and Cys43 each coordinate Zn(2+).

It belongs to the universal ribosomal protein uS14 family. Zinc-binding uS14 subfamily. Part of the 30S ribosomal subunit. Contacts proteins S3 and S10. Zn(2+) is required as a cofactor.

Its function is as follows. Binds 16S rRNA, required for the assembly of 30S particles and may also be responsible for determining the conformation of the 16S rRNA at the A site. This chain is Small ribosomal subunit protein uS14, found in Mycoplasmopsis pulmonis (strain UAB CTIP) (Mycoplasma pulmonis).